The sequence spans 444 residues: MKKLYIRTFGCQMNEYDSNKIADVLNHSHGLVLTDDAASANVLLLNTCSIREKAQEKLFHQLGRWRKLKDKNSNLIIGVGGCVASQEGELILERAPYVDIIFGPQTLHRLPSMLNEVLTPTPGMSVKPSIDISFPEIEKFDHLPKPKTSSVTAFVSIMEGCSKYCTFCIVPYTRGEEVSRPFIDVINEVKILAIQGVREVNLLGQNVNAYQGLMDDGEIADLALLINIAAQIDGIKRIRYTTSHPTQFSDSLIEAYMEVPKLASHLHLPIQSGSDKILRLMKRGHMVIEYKSKIRKLRKIRPDISISSDFIIGFPGENEQDFLDTMTLIDEIGFDKSFSFIYSARPGTLASSYLDDVDMDVKKQRLALVQKTIDKNTERISKSMVGSVQKILVENVAKKRDNLFGRTENMRNTHFKGDKSLIGQIVNIKITQGRGNSLVGNLIA.

The MTTase N-terminal domain occupies 2–119; it reads KKLYIRTFGC…LPSMLNEVLT (118 aa). [4Fe-4S] cluster is bound by residues Cys11, Cys48, Cys82, Cys161, Cys165, and Cys168. The Radical SAM core domain occupies 147 to 379; sequence KTSSVTAFVS…QKTIDKNTER (233 aa). The TRAM domain occupies 382-444; that stretch reads KSMVGSVQKI…GNSLVGNLIA (63 aa).

The protein belongs to the methylthiotransferase family. MiaB subfamily. As to quaternary structure, monomer. [4Fe-4S] cluster serves as cofactor.

It is found in the cytoplasm. The enzyme catalyses N(6)-dimethylallyladenosine(37) in tRNA + (sulfur carrier)-SH + AH2 + 2 S-adenosyl-L-methionine = 2-methylsulfanyl-N(6)-dimethylallyladenosine(37) in tRNA + (sulfur carrier)-H + 5'-deoxyadenosine + L-methionine + A + S-adenosyl-L-homocysteine + 2 H(+). Its function is as follows. Catalyzes the methylthiolation of N6-(dimethylallyl)adenosine (i(6)A), leading to the formation of 2-methylthio-N6-(dimethylallyl)adenosine (ms(2)i(6)A) at position 37 in tRNAs that read codons beginning with uridine. This chain is tRNA-2-methylthio-N(6)-dimethylallyladenosine synthase, found in Ruthia magnifica subsp. Calyptogena magnifica.